The chain runs to 129 residues: Membrane protein 0 (129 aa).

A disordered region spans residues 1–25 (MATVHYSRRPGTPPVTLTSSPSMDD). The PPXY motif signature appears at 44-47 (PPPY). A helical transmembrane segment spans residues 100–120 (FLILFGILTLTAVVVAIVAVF).

This sequence belongs to the varicellovirus ORF0 protein family. As to quaternary structure, interacts with host ITCH; this interaction probably mediates ITCH degradation.

The protein localises to the host Golgi apparatus membrane. The sequence is that of Membrane protein 0 from Homo sapiens (Human).